We begin with the raw amino-acid sequence, 171 residues long: MTFTSDSASTRFSQAFGIQTGDAVASTITVFQALSIDDQLAVLWYAYTEMGRSITPAATGAARLQLAEGLLNQIKQMSHAEQLQVMRDLAAKNNTQVSRSYGILSNNTKLAFWYELSELMVKGFVVPVPTDYKISRDGSQVLEALKGLDFGQQITVLRKVVADMGVDPLAD.

One can recognise an OCP N-terminal domain in the interval 21-171 (GDAVASTITV…ADMGVDPLAD (151 aa)).

The protein belongs to the orange carotenoid-binding protein family. 3'-hydroxyechinenone is required as a cofactor.

The protein resides in the cellular thylakoid membrane. Might act as a photo-protectant, protecting against damage induced by excess light via a process known as non-photochemical quenching (NPQ). The chain is Orange carotenoid-binding domain-containing protein from Nostoc sp. (strain PCC 7120 / SAG 25.82 / UTEX 2576).